A 173-amino-acid chain; its full sequence is NADH-ubiquinone oxidoreductase chain 6 (173 aa).

A run of 5 helical transmembrane segments spans residues 1–21, 27–47, 48–68, 87–107, and 139–159; these read MTYF…AVAS, YGVV…LSLG, VSFV…VVFV, VVGY…VGGF, and CGVG…FVVL.

This sequence belongs to the complex I subunit 6 family.

The protein resides in the mitochondrion membrane. The catalysed reaction is a ubiquinone + NADH + 5 H(+)(in) = a ubiquinol + NAD(+) + 4 H(+)(out). Functionally, core subunit of the mitochondrial membrane respiratory chain NADH dehydrogenase (Complex I) that is believed to belong to the minimal assembly required for catalysis. Complex I functions in the transfer of electrons from NADH to the respiratory chain. The immediate electron acceptor for the enzyme is believed to be ubiquinone. In Ptychoramphus aleuticus (Cassin's auklet), this protein is NADH-ubiquinone oxidoreductase chain 6 (MT-ND6).